We begin with the raw amino-acid sequence, 294 residues long: 4-hydroxy-tetrahydrodipicolinate synthase (294 aa).

A pyruvate-binding site is contributed by threonine 45. Residue tyrosine 133 is the Proton donor/acceptor of the active site. Lysine 162 serves as the catalytic Schiff-base intermediate with substrate. Isoleucine 204 is a pyruvate binding site.

This sequence belongs to the DapA family. As to quaternary structure, homotetramer; dimer of dimers.

Its subcellular location is the cytoplasm. It catalyses the reaction L-aspartate 4-semialdehyde + pyruvate = (2S,4S)-4-hydroxy-2,3,4,5-tetrahydrodipicolinate + H2O + H(+). It participates in amino-acid biosynthesis; L-lysine biosynthesis via DAP pathway; (S)-tetrahydrodipicolinate from L-aspartate: step 3/4. Functionally, catalyzes the condensation of (S)-aspartate-beta-semialdehyde [(S)-ASA] and pyruvate to 4-hydroxy-tetrahydrodipicolinate (HTPA). The chain is 4-hydroxy-tetrahydrodipicolinate synthase from Bartonella tribocorum (strain CIP 105476 / IBS 506).